An 87-amino-acid chain; its full sequence is Mitochondrial import inner membrane translocase subunit TIM9 (87 aa).

Positions cysteine 35–cysteine 59 match the Twin CX3C motif motif. Cystine bridges form between cysteine 35/cysteine 59 and cysteine 39/cysteine 55.

The protein belongs to the small Tim family. In terms of assembly, heterohexamer; composed of 3 copies of TIM9 and 3 copies of TIM10, named soluble 70 kDa complex. Associates with the TIM22 complex, whose core is composed of TIM22 and TIM54. Interacts with the transmembrane regions of multi-pass transmembrane proteins in transit.

The protein localises to the mitochondrion inner membrane. Functionally, mitochondrial intermembrane chaperone that participates in the import and insertion of multi-pass transmembrane proteins into the mitochondrial inner membrane. Also required for the transfer of beta-barrel precursors from the TOM complex to the sorting and assembly machinery (SAM complex) of the outer membrane. Acts as a chaperone-like protein that protects the hydrophobic precursors from aggregation and guide them through the mitochondrial intermembrane space. This is Mitochondrial import inner membrane translocase subunit TIM9 (TIM9) from Candida albicans (strain SC5314 / ATCC MYA-2876) (Yeast).